Here is a 153-residue protein sequence, read N- to C-terminus: Large ribosomal subunit protein uL23m (153 aa).

The segment at 110-153 (IFPEKDKKSKEGSVEEMHEKFMEDERQRQKPDPRRGGVTEWFGL) is disordered. Over residues 111–146 (FPEKDKKSKEGSVEEMHEKFMEDERQRQKPDPRRGG) the composition is skewed to basic and acidic residues.

Belongs to the universal ribosomal protein uL23 family. Component of the mitochondrial ribosome large subunit (39S) which comprises a 16S rRNA and about 50 distinct proteins.

It localises to the mitochondrion. The chain is Large ribosomal subunit protein uL23m (mrpl23) from Danio rerio (Zebrafish).